Here is a 560-residue protein sequence, read N- to C-terminus: Vesicular glutamate transporter 1 (560 aa).

The Cytoplasmic segment spans residues 1 to 63; the sequence is MEFRQEEFRK…CTCFGLPRRY (63 aa). A helical membrane pass occupies residues 64-84; sequence IIAIMSGLGFCISFGIRCNLG. Residues 85–116 are Extracellular-facing; it reads VAIVSMVNNSTTHRGGHVVMQKAQFNWDPETV. Residues 117 to 137 traverse the membrane as a helical segment; that stretch reads GLIHGSFFWGYIVTQIPGGFI. Topologically, residues 138-140 are cytoplasmic; the sequence is CQK. Residues 141 to 161 form a helical membrane-spanning segment; sequence FAANRVFGFAIVATSTLNMLI. Topologically, residues 162–169 are extracellular; it reads PSAARVHY. Residues 170–190 form a helical membrane-spanning segment; that stretch reads GCVIFVRILQGLVEGVTYPAC. At 191-208 the chain is on the cytoplasmic side; sequence HGIWSKWAPPLERSRLAT. Residues 209–229 traverse the membrane as a helical segment; that stretch reads TAFCGSYAGAVVAMPLAGVLV. The Extracellular segment spans residues 230–236; that stretch reads QYSGWSS. Residues 237–257 traverse the membrane as a helical segment; sequence VFYVYGSFGIFWYLFWLLVSY. The Cytoplasmic segment spans residues 258 to 302; that stretch reads ESPALHPSISEEERKYIEDAIGESAKLMNPVTKFNTPWRRFFTSM. A helical transmembrane segment spans residues 303 to 323; the sequence is PVYAIIVANFCRSWTFYLLLI. Residues 324–341 are Extracellular-facing; the sequence is SQPAYFEEVFGFEISKVG. The helical transmembrane segment at 342 to 362 threads the bilayer; it reads LVSALPHLVMTIIVPIGGQIA. At 363–378 the chain is on the cytoplasmic side; it reads DFLRSRRIMSTTNVRK. The helical transmembrane segment at 379–399 threads the bilayer; it reads LMNCGGFGMEATLLLVVGYSH. Topologically, residues 400–401 are extracellular; sequence SK. A helical membrane pass occupies residues 402 to 422; it reads GVAISFLVLAVGFSGFAISGF. At 423 to 435 the chain is on the cytoplasmic side; it reads NVNHLDIAPRYAS. A helical transmembrane segment spans residues 436–456; the sequence is ILMGISNGVGTLSGMVCPIIV. Topologically, residues 457–469 are extracellular; the sequence is GAMTKHKTREEWQ. A helical transmembrane segment spans residues 470–490; it reads YVFLIASLVHYGGVIFYGVFA. The Cytoplasmic segment spans residues 491-560; that stretch reads SGEKQPWAEP…PRPPPPVRDY (70 aa). The tract at residues 497–560 is disordered; sequence WAEPEEMSEE…PRPPPPVRDY (64 aa). Residue serine 504 is modified to Phosphoserine. Positions 520 to 529 are enriched in acidic residues; sequence DESEMEDEAE. Composition is skewed to pro residues over residues 531 to 540 and 550 to 560; these read PGAPPAPPPS and PPRPPPPVRDY.

It belongs to the major facilitator superfamily. Sodium/anion cotransporter family. VGLUT subfamily. As to quaternary structure, interacts with SHANK3.

The protein resides in the cytoplasmic vesicle. Its subcellular location is the secretory vesicle. It localises to the synaptic vesicle membrane. It is found in the cell membrane. The protein localises to the synapse. The protein resides in the synaptosome. It carries out the reaction L-glutamate(out) = L-glutamate(in). It catalyses the reaction chloride(in) = chloride(out). The enzyme catalyses 3 Na(+)(out) + phosphate(out) = 3 Na(+)(in) + phosphate(in). The catalysed reaction is phosphate(in) = phosphate(out). It carries out the reaction K(+)(in) + H(+)(out) = K(+)(out) + H(+)(in). Its activity is regulated as follows. Chloride channel activity is allosterically activated by lumenal H(+) and Cl(-) leading to synaptic vesicles acidification. The L-glutamate transport activity is allosterically activated by lumenal H(+) and Cl(-). The allosteric activation by H(+) efficiently prevents non-vesicular efflux across the plasma membrane, thereby restricting L-glutamate transport activity to acidic membranes such as synaptic vesicles. Multifunctional transporter that transports L-glutamate as well as multiple ions such as chloride, proton, potassium, sodium and phosphate. At the synaptic vesicle membrane, mainly functions as an uniporter which transports preferentially L-glutamate but also phosphate from the cytoplasm into synaptic vesicles at presynaptic nerve terminals of excitatory neural cells. The L-glutamate or phosphate uniporter activity is electrogenic and is driven by the proton electrochemical gradient, mainly by the electrical gradient established by the vacuolar H(+)-ATPase across the synaptic vesicle membrane. In addition, functions as a chloride channel that allows a chloride permeation through the synaptic vesicle membrane that affects the proton electrochemical gradient and promotes synaptic vesicles acidification. Moreover, may function as a K(+)/H(+) antiport allowing to maintain the electrical gradient and to decrease chemical gradient and therefore sustain vesicular glutamate uptake. The vesicular K(+)/H(+) antiport activity is electroneutral. At the plasma membrane, following exocytosis, functions as a symporter of Na(+) and phosphate from the extracellular space to the cytoplasm allowing synaptic phosphate homeostasis regulation. The symporter activity is driven by an inside negative membrane potential and is electrogenic. Is necessary for synaptic signaling of visual-evoked responses from photoreceptors. This Bos taurus (Bovine) protein is Vesicular glutamate transporter 1.